Here is a 703-residue protein sequence, read N- to C-terminus: Elongation factor G (703 aa).

One can recognise a tr-type G domain in the interval 10 to 286 (NKVRNIGIMA…AVVKFLPSPL (277 aa)). Residues 19 to 26 (AHIDAGKT), 83 to 87 (DTPGH), and 137 to 140 (NKLD) each bind GTP.

The protein belongs to the TRAFAC class translation factor GTPase superfamily. Classic translation factor GTPase family. EF-G/EF-2 subfamily.

The protein resides in the cytoplasm. Its function is as follows. Catalyzes the GTP-dependent ribosomal translocation step during translation elongation. During this step, the ribosome changes from the pre-translocational (PRE) to the post-translocational (POST) state as the newly formed A-site-bound peptidyl-tRNA and P-site-bound deacylated tRNA move to the P and E sites, respectively. Catalyzes the coordinated movement of the two tRNA molecules, the mRNA and conformational changes in the ribosome. The protein is Elongation factor G of Nocardioides sp. (strain ATCC BAA-499 / JS614).